We begin with the raw amino-acid sequence, 201 residues long: Ubiquinone biosynthesis accessory factor UbiJ (201 aa).

The SCP2 domain occupies 15-112 (LNTFLYRSPA…QVVQNFVALA (98 aa)).

It belongs to the UbiJ family.

Its subcellular location is the cytoplasm. Its pathway is cofactor biosynthesis; ubiquinone biosynthesis. In terms of biological role, required for ubiquinone (coenzyme Q) biosynthesis under aerobic conditions. Binds hydrophobic ubiquinone biosynthetic intermediates via its SCP2 domain and is essential for the stability of the Ubi complex. May constitute a docking platform where Ubi enzymes assemble and access their SCP2-bound polyprenyl substrates. Required for intracellular proliferation in macrophages. This Salmonella typhimurium (strain LT2 / SGSC1412 / ATCC 700720) protein is Ubiquinone biosynthesis accessory factor UbiJ.